A 27-amino-acid polypeptide reads, in one-letter code: Cupiennin-3b (27 aa).

Glutamate 27 carries the post-translational modification Glutamic acid 1-amide.

In terms of tissue distribution, expressed by the venom gland.

Its subcellular location is the secreted. The protein is Cupiennin-3b of Cupiennius salei (American wandering spider).